Consider the following 2380-residue polypeptide: DNA polymerase epsilon catalytic subunit A (2380 aa).

The segment covering 169 to 196 (YYNKGNNNNNNHQNYNNNNNQNNNNFNK) has biased composition (low complexity). Disordered regions lie at residues 169–209 (YYNK…NNSK), 1178–1210 (FFEKTEDNDQDNDNDNDNDNDNDNDNSKPQQTD), 1766–1787 (KNTSNNSNTKNGANQNTTNDTT), 1967–1998 (QQQQQQQDNADDDDDDDVSENEEEQQQNKNKK), and 2059–2120 (KIST…TTTS). Acidic residues predominate over residues 1183 to 1201 (EDNDQDNDNDNDNDNDNDN). Low complexity predominate over residues 1767–1776 (NTSNNSNTKN). The span at 1777–1787 (GANQNTTNDTT) shows a compositional bias: polar residues. Residues 1975–1991 (NADDDDDDDVSENEEEQ) are compositionally biased toward acidic residues. 2 stretches are compositionally biased toward low complexity: residues 2059 to 2081 (KISTTSSSSNNDSTAATTTTTKD) and 2110 to 2120 (SSSSSTTTTTS). Zn(2+) is bound by residues Cys2225 and Cys2228. A CysA-type zinc finger spans residues 2225–2288 (CSSCHSCRDI…RVPELSCIQC (64 aa)). A compositionally biased stretch (low complexity) spans 2245–2258 (ISSRLSSQQKSNNN). The interval 2245 to 2275 (ISSRLSSQQKSNNNDSDDSDDDNEENEGDDD) is disordered. Over residues 2259-2275 (DSDDSDDDNEENEGDDD) the composition is skewed to acidic residues. The Zn(2+) site is built by Cys2285 and Cys2288. 4 residues coordinate [4Fe-4S] cluster: Cys2319, Cys2322, Cys2334, and Cys2337. A CysB motif motif is present at residues 2319–2337 (CSKCNDVKSDNLGDICPQC).

This sequence belongs to the DNA polymerase type-B family. As to quaternary structure, consists of three subunits: pole, pole2 and pole3. The cofactor is [4Fe-4S] cluster.

Its subcellular location is the nucleus. It carries out the reaction DNA(n) + a 2'-deoxyribonucleoside 5'-triphosphate = DNA(n+1) + diphosphate. In terms of biological role, DNA polymerase II participates in chromosomal DNA replication. The chain is DNA polymerase epsilon catalytic subunit A (pole) from Dictyostelium discoideum (Social amoeba).